A 619-amino-acid chain; its full sequence is 4-hydroxyphenylalkanoate adenylyltransferase (619 aa).

It belongs to the ATP-dependent AMP-binding enzyme family.

The enzyme catalyses 17-(4-hydroxyphenyl)heptadecanoate + holo-[(phenol)carboxyphthiodiolenone synthase] + ATP = 17-(4-hydroxyphenyl)heptadecanoyl-[(phenol)carboxyphthiodiolenone synthase] + AMP + diphosphate. It catalyses the reaction 19-(4-hydroxyphenyl)nonadecanoate + holo-[(phenol)carboxyphthiodiolenone synthase] + ATP = 19-(4-hydroxyphenyl)nonadecanoyl-[(phenol)carboxyphthiodiolenone synthase] + AMP + diphosphate. It functions in the pathway lipid metabolism; fatty acid biosynthesis. Its function is as follows. Catalyzes the activation of long-chain fatty acids as acyl-adenylates (acyl-AMP), which are then transferred to the multifunctional polyketide synthase PpsA for further chain extension. Involved in the biosynthesis of phenolphthiocerol, which is an important intermediate in the biosynthesis of phenolic glycolipid (PGL), also called mycosid B. This chain is 4-hydroxyphenylalkanoate adenylyltransferase (fadD29), found in Mycobacterium bovis (strain ATCC BAA-935 / AF2122/97).